The sequence spans 433 residues: Serine--tRNA ligase (433 aa).

Position 235-237 (235-237 (TSE)) interacts with L-serine. 266-268 (RSE) is a binding site for ATP. Glu-289 lines the L-serine pocket. 353-356 (EISS) provides a ligand contact to ATP. Ser-388 is a binding site for L-serine.

It belongs to the class-II aminoacyl-tRNA synthetase family. Type-1 seryl-tRNA synthetase subfamily. As to quaternary structure, homodimer. The tRNA molecule binds across the dimer.

It is found in the cytoplasm. The catalysed reaction is tRNA(Ser) + L-serine + ATP = L-seryl-tRNA(Ser) + AMP + diphosphate + H(+). It carries out the reaction tRNA(Sec) + L-serine + ATP = L-seryl-tRNA(Sec) + AMP + diphosphate + H(+). The protein operates within aminoacyl-tRNA biosynthesis; selenocysteinyl-tRNA(Sec) biosynthesis; L-seryl-tRNA(Sec) from L-serine and tRNA(Sec): step 1/1. In terms of biological role, catalyzes the attachment of serine to tRNA(Ser). Is also able to aminoacylate tRNA(Sec) with serine, to form the misacylated tRNA L-seryl-tRNA(Sec), which will be further converted into selenocysteinyl-tRNA(Sec). The sequence is that of Serine--tRNA ligase from Burkholderia ambifaria (strain MC40-6).